The primary structure comprises 162 residues: Ribose-5-phosphate isomerase B (162 aa).

D-ribulose 5-phosphate contacts are provided by residues 11–12 (DH) and 70–74 (GSGNG). Glutamate 75 functions as the Proton acceptor in the catalytic mechanism. Histidine 102 serves as the catalytic Proton donor. Asparagine 103, arginine 113, arginine 137, and arginine 141 together coordinate D-ribulose 5-phosphate.

It belongs to the LacAB/RpiB family. Homodimer.

It carries out the reaction aldehydo-D-ribose 5-phosphate = D-ribulose 5-phosphate. Its pathway is carbohydrate degradation; pentose phosphate pathway; D-ribose 5-phosphate from D-ribulose 5-phosphate (non-oxidative stage): step 1/1. Its function is as follows. Catalyzes the interconversion of ribulose-5-P and ribose-5-P. This chain is Ribose-5-phosphate isomerase B, found in Mycobacterium leprae (strain TN).